Consider the following 208-residue polypeptide: MNQKNSLGLNKCFLDKIDPIDLFEVWMNEAKKTELNDPNALALATSDQNNFPSIRMVLLKDFNKDGFVFYTNLNSQKGNELKNNPKASMCFHWKSLLRQVRINGMVQKVSNKVADEYYSSRGYESRIGAWASKQSTVINNRDELLNSIEEYKKKYSNKNDVPRPEHWSGWNLIPTSIEFWLDGESRIHERLKYTKDTEGNWVKSLLSP.

FMN contacts are provided by residues 55 to 60 (RMVLLK), 70 to 71 (YT), lysine 77, and glutamine 99. Lysine 60 contributes to the substrate binding site. Residues tyrosine 117, arginine 121, and serine 125 each coordinate substrate. FMN is bound by residues 134-135 (QS) and tryptophan 180. Residue 186 to 188 (RIH) participates in substrate binding. FMN is bound at residue arginine 190.

This sequence belongs to the pyridoxamine 5'-phosphate oxidase family. As to quaternary structure, homodimer. Requires FMN as cofactor.

The catalysed reaction is pyridoxamine 5'-phosphate + O2 + H2O = pyridoxal 5'-phosphate + H2O2 + NH4(+). It carries out the reaction pyridoxine 5'-phosphate + O2 = pyridoxal 5'-phosphate + H2O2. Its pathway is cofactor metabolism; pyridoxal 5'-phosphate salvage; pyridoxal 5'-phosphate from pyridoxamine 5'-phosphate: step 1/1. It functions in the pathway cofactor metabolism; pyridoxal 5'-phosphate salvage; pyridoxal 5'-phosphate from pyridoxine 5'-phosphate: step 1/1. In terms of biological role, catalyzes the oxidation of either pyridoxine 5'-phosphate (PNP) or pyridoxamine 5'-phosphate (PMP) into pyridoxal 5'-phosphate (PLP). The polypeptide is Pyridoxine/pyridoxamine 5'-phosphate oxidase (Pelagibacter ubique (strain HTCC1062)).